The primary structure comprises 251 residues: Eukaryotic translation initiation factor 3 subunit K (251 aa).

Positions 46-224 constitute a PCI domain; sequence FDCYANLALL…VKVPTNKENE (179 aa).

This sequence belongs to the eIF-3 subunit K family. As to quaternary structure, component of the eukaryotic translation initiation factor 3 (eIF-3) complex.

Its subcellular location is the cytoplasm. Component of the eukaryotic translation initiation factor 3 (eIF-3) complex, which is involved in protein synthesis of a specialized repertoire of mRNAs and, together with other initiation factors, stimulates binding of mRNA and methionyl-tRNAi to the 40S ribosome. The eIF-3 complex specifically targets and initiates translation of a subset of mRNAs involved in cell proliferation. The chain is Eukaryotic translation initiation factor 3 subunit K from Aspergillus oryzae (strain ATCC 42149 / RIB 40) (Yellow koji mold).